The chain runs to 223 residues: Killer cell lectin-like receptor subfamily B member 1B allele A (223 aa).

Residues 1–43 are Cytoplasmic-facing; that stretch reads MDSTTLVYADLNLARIQEPKHDSPPSLSPDTCRCPRWHRLALK. Residues 6-11 carry the ITIM motif motif; sequence LVYADL. Positions 32 to 35 match the LCK-binding motif motif; sequence CRCP. Residues 44–63 form a helical; Signal-anchor for type II membrane protein membrane-spanning segment; that stretch reads FGCAGLILLVLVVIGLCVLV. Over 64–223 the chain is Extracellular; sequence LSVQKSSVQK…LNHETPSNDS (160 aa). The region spanning 93–212 is the C-type lectin domain; that stretch reads ECPQDWLSHR…STDNRWICQK (120 aa). 2 disulfides stabilise this stretch: cysteine 122-cysteine 210 and cysteine 189-cysteine 202.

Homodimer; disulfide-linked. Interacts with tyrosine kinase LCK. Binds PTPN6/SHP-1 in a phosphorylation-dependent manner. In terms of tissue distribution, expressed in NK cells and a subset of T-cells.

It is found in the membrane. Its function is as follows. Receptor for CLEC2D/OCIL. Ligand-binding contributes to inhibition of cytotoxic natural killer (NK) cells. May mediate MHC class I-independent 'missing-self' recognition of allografts, tumor cells and virus-infected cells. The protein is Killer cell lectin-like receptor subfamily B member 1B allele A (Klrb1b) of Mus musculus (Mouse).